The following is a 1373-amino-acid chain: MFSTRISGDMKIFAADVAESSVTATCNTSVQQQQSQQLEFRTRMSAGSPSSKSGQCHLKFGKYNNKTANLLRQVNSCHSSNSSSNTSNNNNEAIKGQQQQPLHYCNSNNSHSWARKKYFGNGNSNNSLLQQQQQPSSFFQRQQQQHQMQMQQEKQATNNNDALMKNQNVVNAHVSDCKSSDSNNNSTSSSNNNSTISSNNNNTSSASNNNTGSSSSCSNRTKPAKWLNENSSSSSSSNNNNISCRNNNTSSIDTKRRNSSAGATAAYYRKSESESGSSEGAAESTETEATRTGGCNSNRTAESSSADGGTQATMGKSQDQEQDQTVKQRPRQQPLSFWKTNYPQTSATQLKDKETVAAVVSAAAVAAAAAAASASEQQQQQQSLSIEHRRNSGYQQHQQHNYYPYYYSQPKQLTIASFLQKEMLPDSTEKSSSNTGGSNMIRSSSNGNSNFSRHQYGHQSTGSGYQQQQQRYRNAQNVYQQYQHQQQHHAQQHTHPHFRRKHSDNGSGINKKMHYSPPGKSGDPADRSASGQQQHHHPHQQQKTIEILASSHFNAMHRRMQGGNNKNGYYQHSYNPMTGEVGSTPTRSEHQNIYNLTYIHVDTEATGEAASAAGSTPVVKPSLLSKPNISITPASSTTPTTVDRALLPAVRSVSAPASGSALPAPANHVRNMFPPPPLAMLGGHGLLSPVTTTTPTKMISCAQLDEAITAAAASGDKLSTSPSYNQAGHYIMPPQQQQQQQLSSHPIPTGTSSHPPPPPPPHMFFHFADGFCNPGQGHQAPPATMWPHSSSPCYPASYGSSCGSGTGAGTSPHNNDGNAGALRPASPALSSSSLGSESQWSGTSNRSRLGHNGHPSISPTPSALGSAQLSPHLAEMRVQHPLHQQHPPSHASHRPHGQMGGHAMSSYVPHRPPPPPHPSISSPNPTPVATGAGGPWYEMILPPDRYLAQARNIEVTVQPEKLICMCKYDNLSAEIWKRFRGAQQTHNKFKLKMRLWRYLYLWMHQPMFERYRICLVGSTITGFGTDSSDIDMCLLPEQGVHPHQHQYHQHHHFHNEKRTEALIILTLFNAVLKDTEVFQDFNLIEARVPILRFKDISNGIEVDLNFNNCVGIKNTYLLQLYAQMDWRTRPLVVIVKLWAQYHDINDAKRMTISSYSLVLMVLHYLQHACVPHVLPCLHSLYPEKFQLGQQDCLDLDLIEPIEPYQALNTQTLGEHLLGFFKYYSTFDFRNFAISIRTGGVLPVSTCRMAKSPKNDVYQWKELNIEEPFDLSNTARSVYDGPTFERVKAVFLISARRLDHTLDLATIFRPIHHVPEHFPQLQQHQQQFEQQLHHPISGQQRSAGGGGDGANPVPSTLNPDAASTFAETTAAHVA.

A compositionally biased stretch (low complexity) spans 75–91; that stretch reads NSCHSSNSSSNTSNNNN. Disordered regions lie at residues 75-155, 175-340, 425-543, 734-770, 802-866, and 880-928; these read NSCH…QEKQ, SDCK…FWKT, PDST…QQQK, PQQQ…FADG, CGSG…ALGS, and HPLH…PTPV. Polar residues predominate over residues 96–112; it reads GQQQQPLHYCNSNNSHS. Composition is skewed to low complexity over residues 130–152, 180–219, 228–251, and 274–284; these read QQQQ…QMQQ, SDSN…SCSN, NENS…NTSS, and ESGSSEGAAES. Composition is skewed to polar residues over residues 295–340 and 430–442; these read CNSN…FWKT and KSSS…NMIR. Low complexity predominate over residues 443–485; the sequence is SSSNGNSNFSRHQYGHQSTGSGYQQQQQRYRNAQNVYQQYQHQ. The segment covering 486–502 has biased composition (basic residues); the sequence is QQHHAQQHTHPHFRRKH. Composition is skewed to low complexity over residues 735-753 and 819-844; these read QQQQ…GTSS and AGAL…SGTS. Polar residues predominate over residues 855–866; that stretch reads PSISPTPSALGS. The span at 880–890 shows a compositional bias: low complexity; that stretch reads HPLHQQHPPSH. The tract at residues 945 to 1373 is sufficent for interaction with Dcr-2; sequence RYLAQARNIE…FAETTAAHVA (429 aa). 2 residues coordinate Mg(2+): Asp-1029 and Asp-1031. The region spanning 1211 to 1272 is the PAP-associated domain; it reads TLGEHLLGFF…NIEEPFDLSN (62 aa). The segment covering 1320–1341 has biased composition (low complexity); sequence LQQHQQQFEQQLHHPISGQQRS. Residues 1320–1359 form a disordered region; the sequence is LQQHQQQFEQQLHHPISGQQRSAGGGGDGANPVPSTLNPD.

It belongs to the DNA polymerase type-B-like family. GLD2 subfamily. Interacts with orb, an RNA-binding protein, generating an ovarian cytoplasmic polyadenylation complex. Interacts (via C-terminus) with Dcr-2. Mg(2+) serves as cofactor. It depends on Mn(2+) as a cofactor. Expressed in ovaries. Not expressed in adult males.

The protein localises to the cytoplasm. The catalysed reaction is RNA(n) + ATP = RNA(n)-3'-adenine ribonucleotide + diphosphate. Functionally, cytoplasmic poly(A) RNA polymerase that adds successive AMP monomers to the 3'-end of specific maternal RNAs (bcd, Tl, and tor), forming a poly(A) tail, during late oogenesis and early embryogenesis. In contrast to the canonical nuclear poly(A) RNA polymerase, it only adds poly(A) to selected cytoplasmic mRNAs. Required for localization of mRNAs to both poles of the egg, to recruit or maintain known centrosomal proteins with two types of microtubule organizing centers (MTOCs): the central MTOC that forms between the meiosis II tandem spindles and the centrosomes of the mitotic spindle. Required at the final stage of oogenesis for meiosis I metaphase arrest and for progression beyond this stage. Functions with the RNA-binding protein Dcr-2 to promote cytoplasmic polyadenylation and translational activation of certain mRNAs such as Tl and r2d2. As a consequence, is involved in regulating Toll immune signaling and promoting resistance to fungal infection. This is Poly(A) RNA polymerase gld-2 homolog B (wisp) from Drosophila melanogaster (Fruit fly).